We begin with the raw amino-acid sequence, 518 residues long: Na(+)/H(+) exchange regulatory cofactor NHE-RF3 (518 aa).

The PDZ 1 domain maps to 9–90 (ECKLSKEEGQ…AVTLLVLDGN (82 aa)). A phosphoserine mark is found at Ser-108, Ser-148, Ser-192, Ser-250, Ser-334, and Ser-348. PDZ domains follow at residues 135-215 (LCYL…VDKE) and 243-323 (IVEM…VDKE). The PDZ 4 domain occupies 378–458 (LCRLDKGENG…NVTLLVCGKK (81 aa)). Thr-451 is modified (phosphothreonine). Residues 499-518 (KERAHSTASNSSSNSEDTEL) form a disordered region. Residues Ser-507, Ser-509, Ser-510, Ser-511, and Ser-513 each carry the phosphoserine modification. Positions 507 to 518 (SNSSSNSEDTEL) are enriched in low complexity.

This sequence belongs to the NHER family. In terms of assembly, interacts with PDZK1IP1 and ABCC2. Interacts (via PDZ domains 1 and 3) with SCARB1 (C-terminal domain). Forms a heterodimeric complex with NHERF1. Interacts with AKAP2, BCR, CFTR, SLCO1A1, SLC22A12, SLC22A4, SLC22A5, NHERF2 and SLC17A1. Component of a complex, composed of PDZK1, SYNGAP1, KLHL17 and NMDA receptors. Interacts (via PDZ1 domain) directly with KLHL17; the interaction is important for integrity of actin cytoskeleton structures in neurons. Interacts (via C-terminal PDZ domain) with SLC9A3 (via C-terminal domain). Interacts (via the first PDZ domain) with PTGIR (via non-isoprenylated C-terminus). Binds to the C-terminal region of SLC26A3. Interacts (via C-terminal PDZ domain) with SLC26A6 (via C-terminal domain). Interacts (via PDZ domains 1 and 3) with SLC5A8 (via PDZ-binding motif); interaction increases nicotinate transport activity of SLC5A8. As to expression, highly expressed in the brush border membrane of duodenal and ileal mucosa.

It is found in the membrane. It localises to the cell membrane. A scaffold protein that connects plasma membrane proteins and regulatory components, regulating their surface expression in epithelial cells apical domains. May be involved in the coordination of a diverse range of regulatory processes for ion transport and second messenger cascades. In complex with NHERF1, may cluster proteins that are functionally dependent in a mutual fashion and modulate the trafficking and the activity of the associated membrane proteins. May play a role in the cellular mechanisms associated with multidrug resistance through its interaction with ABCC2 and PDZK1IP1. May potentiate the CFTR chloride channel activity. Required for normal cell-surface expression of SCARB1. Plays a role in maintaining normal plasma cholesterol levels via its effects on SCARB1. Plays a role in the normal localization and function of the chloride-anion exchanger SLC26A6 to the plasma membrane in the brush border of the proximal tubule of the kidney. May be involved in the regulation of proximal tubular Na(+)-dependent inorganic phosphate cotransport therefore playing an important role in tubule function. In Oryctolagus cuniculus (Rabbit), this protein is Na(+)/H(+) exchange regulatory cofactor NHE-RF3 (PDZK1).